A 305-amino-acid polypeptide reads, in one-letter code: MLSITEEIKNKGRDIGFHKIGIANPHIAYQDNAVSNLQGWLSSGYQADMTWMDNPKRFDITQCMPDIQSVITVALNYYTPHQHSSNSRYGKVSRYAWGKDYHKVLSQKLKLFCKWLNNRGIKTTCYVDTGPIQEKVWAERSGVGWIAKNGNVITKEFGSWVFLGVVLTNLSLTSDTPHAKYCGTCRKCLDICPTKAIVHPFVVDSRRCIAYNTIENRSNDFPEYIKNNLNGWIAGCDLCQDVCPWNKRFSKETNIQDFYPQPGNISLDLKEISNLTEIQWQQKFSSSSLKRIKVKAWRRNAKANL.

The active-site Proton donor is Asp128. The 4Fe-4S ferredoxin-type domain occupies 170-202; it reads LSLTSDTPHAKYCGTCRKCLDICPTKAIVHPFV. Residues Cys182, Cys185, Cys188, Cys192, Cys208, Cys236, Cys239, and Cys243 each coordinate [4Fe-4S] cluster.

Belongs to the QueG family. As to quaternary structure, monomer. The cofactor is cob(II)alamin. It depends on [4Fe-4S] cluster as a cofactor.

Its subcellular location is the cytoplasm. It catalyses the reaction epoxyqueuosine(34) in tRNA + AH2 = queuosine(34) in tRNA + A + H2O. Its pathway is tRNA modification; tRNA-queuosine biosynthesis. Catalyzes the conversion of epoxyqueuosine (oQ) to queuosine (Q), which is a hypermodified base found in the wobble positions of tRNA(Asp), tRNA(Asn), tRNA(His) and tRNA(Tyr). This Atelocyanobacterium thalassa (isolate ALOHA) protein is Epoxyqueuosine reductase.